The primary structure comprises 669 residues: UvrABC system protein C (669 aa).

Residues 16-95 (TNPGVYRFRD…IKEFKPRFNV (80 aa)) enclose the GIY-YIG domain. The UVR domain maps to 207–242 (KRFIGRLEKDMAAAVAELDYERAARVRDDIIALRKV).

It belongs to the UvrC family. As to quaternary structure, interacts with UvrB in an incision complex.

Its subcellular location is the cytoplasm. Functionally, the UvrABC repair system catalyzes the recognition and processing of DNA lesions. UvrC both incises the 5' and 3' sides of the lesion. The N-terminal half is responsible for the 3' incision and the C-terminal half is responsible for the 5' incision. This is UvrABC system protein C from Arthrobacter sp. (strain FB24).